Here is a 55-residue protein sequence, read N- to C-terminus: Large ribosomal subunit protein bL32 (55 aa).

The segment covering 1–23 (MAVPKKKTSKAKRDQRRAHWKRK) has biased composition (basic residues). The disordered stretch occupies residues 1–26 (MAVPKKKTSKAKRDQRRAHWKRKATI).

It belongs to the bacterial ribosomal protein bL32 family.

In Picosynechococcus sp. (strain ATCC 27264 / PCC 7002 / PR-6) (Agmenellum quadruplicatum), this protein is Large ribosomal subunit protein bL32.